Consider the following 309-residue polypeptide: MKIGLVKTNFPGERRVPLLPKDIKDFKNEILVEEGFGKFLDIDDQEYIDKGCHILSRAEVFSESEAIFSLKLIQPTDYPYLREGQMIIGWTHPFGSGRLFMKEQALPKKLIVVDLDSNSPCIYYENEIFESGIPKGLLYKNSFYAGYAGVLDALLQYGFIPTEETKIAILGSGNVAQGAFSSISKYSSNIRMYYRKTMSIFKENYTKYDIIINGIEIGKEDDPILSFSEQKSLKKGTFIIDVAADAGNTIEGTHFTSMDDPIYENDGKYYYVVPNTPSLIYRNVSQDLSKILSENIFSEDCSRFLSIKS.

The pyruvate site is built by R15, K71, and H92. NADP(+) is bound at residue 171–176 (GSGNVA).

The protein belongs to the AlaDH/PNT family. CEOS subfamily. As to quaternary structure, homotetramer.

It catalyses the reaction N(5)-[1(S)-1-carboxyethyl]-L-ornithine + NADP(+) + H2O = L-ornithine + pyruvate + NADPH + H(+). Its function is as follows. Catalyzes the NADPH-dependent reductive condensation between pyruvic acid and the side chain amino group of L-ornithine to form N(5)-(L-1-carboxyethyl)-L-ornithine. To a lesser extent, can also use L-lysine as substrate (yielding N(6)-(L-1-carboxyethyl)-L-lysine). The sequence is that of N(5)-(carboxyethyl)ornithine synthase (ceo) from Lactococcus lactis subsp. lactis (strain IL1403) (Streptococcus lactis).